The sequence spans 278 residues: Non-haem bromoperoxidase BPO-A2 (278 aa).

The region spanning 26-264 (PVVLIHGFPL…GAPHGLLWTH (239 aa)) is the AB hydrolase-1 domain. Residues S99, D229, and H258 contribute to the active site.

Belongs to the AB hydrolase superfamily. Bacterial non-heme haloperoxidase / perhydrolase family. As to quaternary structure, homotrimer.

Its function is as follows. May be a chlorinating enzyme involved in 7-chlorotetracycline biosynthesis. This Kitasatospora aureofaciens (Streptomyces aureofaciens) protein is Non-haem bromoperoxidase BPO-A2 (bpoA2).